The primary structure comprises 497 residues: Probable malate:quinone oxidoreductase (497 aa).

It belongs to the MQO family. The cofactor is FAD.

It carries out the reaction (S)-malate + a quinone = a quinol + oxaloacetate. It participates in carbohydrate metabolism; tricarboxylic acid cycle; oxaloacetate from (S)-malate (quinone route): step 1/1. In Bacillus cereus (strain ATCC 14579 / DSM 31 / CCUG 7414 / JCM 2152 / NBRC 15305 / NCIMB 9373 / NCTC 2599 / NRRL B-3711), this protein is Probable malate:quinone oxidoreductase.